Reading from the N-terminus, the 453-residue chain is uncharacterized protein (453 aa).

[4Fe-4S] cluster contacts are provided by cysteine 74, cysteine 80, cysteine 83, and cysteine 162. Positions 286, 315, 336, and 384 each coordinate S-adenosyl-L-methionine. Residue cysteine 411 is the Nucleophile of the active site.

Belongs to the class I-like SAM-binding methyltransferase superfamily. RNA M5U methyltransferase family.

This is an uncharacterized protein from Staphylococcus aureus (strain MW2).